The chain runs to 678 residues: RNA helicase NPH-II (678 aa).

One can recognise a Helicase ATP-binding domain in the interval F175–H351. G188–T195 serves as a coordination point for ATP. The DEXH box signature appears at D300 to H303. The 176-residue stretch at P371–L546 folds into the Helicase C-terminal domain.

Belongs to the DEAD box helicase family. DEAH subfamily. Monomer.

It localises to the virion. The enzyme catalyses ATP + H2O = ADP + phosphate + H(+). Functionally, NTP-dependent helicase that catalyzes unidirectional unwinding of 3'tailed duplex RNAs and plays an important role during transcription of early mRNAs, presumably by preventing R-loop formation behind the elongating RNA polymerase. Might also play a role in the export of newly synthesized mRNA chains out of the core into the cytoplasm. Required for replication and propagation of viral particles. The sequence is that of RNA helicase NPH-II (OPG084) from Oryctolagus cuniculus (Rabbit).